We begin with the raw amino-acid sequence, 452 residues long: MSFPKGFLWGAATASYQIEGAWNEDGKGESIWDRFTHQKGNILYGHNGDVACDHYHRHEEDVSLMKELGIKAYRFSTAWARIFPDGFGNINQKGLEFYDKLINELVENGIEPVVTLYHWDLPQKLQDIGGWANPEIVNYYFEYAMLIINRYKDKVKKWITFNEPYCIAFLGHWHGIHAPGIKNFKVAMDVVHNIMLSHFKVVKAVKENNIDVEIGITLNLTPVYLQTERLGYKVSEIEREMVNLSSQLDNELFLDPVLKGSYPQKLLDYLVQKDLLDSQKVNNMQQEVKENFIFPDFLGINYYTRSVRLYDENSGWIFPIRWEHPAGEYTEMGWEVFPQGLFDLLIWIKESYPQIPIYITENGAAYNDKVEDGRVHDQKRVEYLKQHFEAARKAIKNGVDLRGYFVWSLIDNFEWAMGYTKRFGIIYVDYETQKRIKKDSFYFYQQYIKENS.

Substrate is bound by residues Gln17, His118, and Asn162. Catalysis depends on Glu163, which acts as the Proton donor. Tyr303 provides a ligand contact to substrate. Catalysis depends on Glu361, which acts as the Nucleophile. Residues Trp407 and 414–415 each bind substrate; that span reads EW.

This sequence belongs to the glycosyl hydrolase 1 family. Monomer. Homotrimer.

The enzyme catalyses Hydrolysis of terminal, non-reducing beta-D-glucosyl residues with release of beta-D-glucose.. It catalyses the reaction Hydrolysis of terminal non-reducing beta-D-galactose residues in beta-D-galactosides.. The catalysed reaction is Hydrolysis of (1-&gt;4)-beta-D-xylans, to remove successive D-xylose residues from the non-reducing termini.. It carries out the reaction Hydrolysis of (1-&gt;4)-linkages in (1-&gt;4)-beta-D-glucans, to remove successive glucose units.. The enzyme catalyses Hydrolysis of (1-&gt;4)-beta-D-glucosidic linkages in cellulose and cellotetraose, releasing cellobiose from the non-reducing ends of the chains.. It participates in glycan metabolism; beta-D-glucan degradation. The protein operates within glycan metabolism; cellulose degradation. Slight activation by Mn(2+), Ni(2+) and K(+). Slight inhibition by Fe(3+), Zn(2+), Co(2+), Mg(2+), Cu(2+), Na(+) and NH4(+). Functionally, has high beta-D-glucosidase, exoglucanase, beta-D-xylosidase, beta-D-galactosidase, and transgalactosylation activities in vitro. Has a very broad substrate specificity with the highest activity with p-nitrophenyl beta-D-galactopyranoside (pNPGal) as substrate. Active with pNP-beta-D-glucopyranoside (pNPGlu), pNP-beta-D-cellobioside (pNPC), lactose, pNP-beta-D-xylopyranoside (pNPX) and cellobiose in the order of decreasing activity, respectively. Very low activity with soluble polysaccharides synanthrin and locust bean gum. Very low, but detectable activity with insoluble substrates such as cotton and filter paper. No activity with pNP-alpha-L-arabinofuranoside (pNPAr) or carboxymethylcellulose (CMC) as substrates. Synthesizes galactooligosaccharides (GalOS) from lactose. Hydrolyzes pretreated corn stover releasing both glucose and xylose. This multifunctional enzyme may provide C.owensensis the benefit of utilizing a wide variety of available carbon sources in its natural growing environment as the ability to convert a wide range of soluble oligosaccharides to monoses is required in order to assimilate them. This Caldicellulosiruptor owensensis (strain ATCC 700167 / DSM 13100 / OL) protein is Multifunctional glycoside hydrolase.